The chain runs to 516 residues: Anaerobic nitric oxide reductase transcription regulator NorR (516 aa).

Aspartate 57 is subject to 4-aspartylphosphate. One can recognise a Sigma-54 factor interaction domain in the interval isoleucine 187–valine 416. Residues glycine 215 to glutamate 222 and alanine 278 to glutamate 287 each bind ATP. A DNA-binding region (H-T-H motif) is located at residues tryptophan 482–lysine 501.

Its pathway is nitrogen metabolism; nitric oxide reduction. Required for the expression of anaerobic nitric oxide (NO) reductase, acts as a transcriptional activator for at least the norVW operon. Activation also requires sigma-54. This Klebsiella pneumoniae (strain 342) protein is Anaerobic nitric oxide reductase transcription regulator NorR.